A 523-amino-acid polypeptide reads, in one-letter code: Peptide chain release factor 3 (523 aa).

The tr-type G domain occupies 10–277; sequence KKRRTFAIIS…SFVDLAPAPE (268 aa). Residues 19 to 26, 87 to 91, and 141 to 144 each bind GTP; these read SHPDAGKT, DTPGH, and NKLD.

This sequence belongs to the TRAFAC class translation factor GTPase superfamily. Classic translation factor GTPase family. PrfC subfamily.

It is found in the cytoplasm. Functionally, increases the formation of ribosomal termination complexes and stimulates activities of RF-1 and RF-2. It binds guanine nucleotides and has strong preference for UGA stop codons. It may interact directly with the ribosome. The stimulation of RF-1 and RF-2 is significantly reduced by GTP and GDP, but not by GMP. This Lactobacillus helveticus (strain DPC 4571) protein is Peptide chain release factor 3.